The following is a 238-amino-acid chain: Dolichyldiphosphatase 1 (238 aa).

The next 4 helical transmembrane spans lie at 33 to 53 (LAYL…LIIF), 100 to 120 (PSSH…FLYL), 130 to 150 (FLDL…AFLV), and 162 to 182 (WSQV…WFAF).

This sequence belongs to the dolichyldiphosphatase family.

The protein resides in the endoplasmic reticulum membrane. The catalysed reaction is a di-trans,poly-cis-dolichyl diphosphate + H2O = a di-trans,poly-cis-dolichyl phosphate + phosphate + H(+). The protein operates within protein modification; protein glycosylation. In terms of biological role, required for efficient N-glycosylation. Necessary for maintaining optimal levels of dolichol-linked oligosaccharides. Hydrolyzes dolichyl pyrophosphate at a very high rate and dolichyl monophosphate at a much lower rate. Does not act on phosphatidate. This Rhinolophus ferrumequinum (Greater horseshoe bat) protein is Dolichyldiphosphatase 1 (DOLPP1).